Here is a 339-residue protein sequence, read N- to C-terminus: Anthranilate phosphoribosyltransferase (339 aa).

Residues G79, 82–83 (GD), S87, 89–92 (NIST), 107–115 (KHGNRAASS), and A119 contribute to the 5-phospho-alpha-D-ribose 1-diphosphate site. G79 contacts anthranilate. S91 serves as a coordination point for Mg(2+). N110 lines the anthranilate pocket. Anthranilate is bound at residue R165. The Mg(2+) site is built by D224 and E225.

Belongs to the anthranilate phosphoribosyltransferase family. Homodimer. The cofactor is Mg(2+).

The enzyme catalyses N-(5-phospho-beta-D-ribosyl)anthranilate + diphosphate = 5-phospho-alpha-D-ribose 1-diphosphate + anthranilate. It functions in the pathway amino-acid biosynthesis; L-tryptophan biosynthesis; L-tryptophan from chorismate: step 2/5. Functionally, catalyzes the transfer of the phosphoribosyl group of 5-phosphorylribose-1-pyrophosphate (PRPP) to anthranilate to yield N-(5'-phosphoribosyl)-anthranilate (PRA). This chain is Anthranilate phosphoribosyltransferase, found in Lactiplantibacillus plantarum (strain ATCC BAA-793 / NCIMB 8826 / WCFS1) (Lactobacillus plantarum).